The primary structure comprises 352 residues: tRNA N6-adenosine threonylcarbamoyltransferase (352 aa).

Fe cation-binding residues include histidine 115 and histidine 119. Residues 137-141, aspartate 170, glycine 183, and asparagine 281 contribute to the substrate site; that span reads LVSGG. Position 309 (aspartate 309) interacts with Fe cation.

The protein belongs to the KAE1 / TsaD family. Fe(2+) is required as a cofactor.

It localises to the cytoplasm. The catalysed reaction is L-threonylcarbamoyladenylate + adenosine(37) in tRNA = N(6)-L-threonylcarbamoyladenosine(37) in tRNA + AMP + H(+). Functionally, required for the formation of a threonylcarbamoyl group on adenosine at position 37 (t(6)A37) in tRNAs that read codons beginning with adenine. Is involved in the transfer of the threonylcarbamoyl moiety of threonylcarbamoyl-AMP (TC-AMP) to the N6 group of A37, together with TsaE and TsaB. TsaD likely plays a direct catalytic role in this reaction. This is tRNA N6-adenosine threonylcarbamoyltransferase from Methylocapsa acidiphila.